Consider the following 120-residue polypeptide: Ribosome-binding factor A (120 aa).

It belongs to the RbfA family. In terms of assembly, monomer. Binds 30S ribosomal subunits, but not 50S ribosomal subunits or 70S ribosomes.

It is found in the cytoplasm. Its function is as follows. One of several proteins that assist in the late maturation steps of the functional core of the 30S ribosomal subunit. Associates with free 30S ribosomal subunits (but not with 30S subunits that are part of 70S ribosomes or polysomes). Required for efficient processing of 16S rRNA. May interact with the 5'-terminal helix region of 16S rRNA. This Clostridium botulinum (strain Okra / Type B1) protein is Ribosome-binding factor A.